The sequence spans 527 residues: EGF domain-specific O-linked N-acetylglucosamine transferase (527 aa).

The signal sequence occupies residues 1-19 (MLMLLVFGVLLHEVPLSGQ). Residues 295–297 (DYD) carry the Required for optimal activity motif. An N-linked (GlcNAc...) asparagine glycan is attached at asparagine 354. The Prevents secretion from ER motif lies at 524-527 (HDEL).

The protein belongs to the glycosyltransferase 61 family. As to expression, widely expressed. Expressed in brain, heart, kidney, lung, skeletal muscles and thymus. Highest expression is observed in lung and the lowest in skeletal muscles.

The protein resides in the endoplasmic reticulum lumen. The enzyme catalyses L-seryl-[protein] + UDP-N-acetyl-alpha-D-glucosamine = 3-O-(N-acetyl-beta-D-glucosaminyl)-L-seryl-[protein] + UDP + H(+). It carries out the reaction L-threonyl-[protein] + UDP-N-acetyl-alpha-D-glucosamine = 3-O-(N-acetyl-beta-D-glucosaminyl)-L-threonyl-[protein] + UDP + H(+). Functionally, catalyzes the transfer of a single N-acetylglucosamine from UDP-GlcNAc to a serine or threonine residue in extracellular proteins resulting in their modification with a beta-linked N-acetylglucosamine (O-GlcNAc). Specifically glycosylates the Thr residue located between the fifth and sixth conserved cysteines of folded EGF-like domains. The protein is EGF domain-specific O-linked N-acetylglucosamine transferase (Eogt) of Mus musculus (Mouse).